Here is a 603-residue protein sequence, read N- to C-terminus: Isocitrate dehydrogenase kinase/phosphatase (603 aa).

Residues 327–333 (APGIKGL) and Lys-348 contribute to the ATP site. Residue Asp-383 is part of the active site.

The protein belongs to the AceK family.

The protein localises to the cytoplasm. The enzyme catalyses L-seryl-[isocitrate dehydrogenase] + ATP = O-phospho-L-seryl-[isocitrate dehydrogenase] + ADP + H(+). Bifunctional enzyme which can phosphorylate or dephosphorylate isocitrate dehydrogenase (IDH) on a specific serine residue. This is a regulatory mechanism which enables bacteria to bypass the Krebs cycle via the glyoxylate shunt in response to the source of carbon. When bacteria are grown on glucose, IDH is fully active and unphosphorylated, but when grown on acetate or ethanol, the activity of IDH declines drastically concomitant with its phosphorylation. The protein is Isocitrate dehydrogenase kinase/phosphatase of Burkholderia thailandensis (strain ATCC 700388 / DSM 13276 / CCUG 48851 / CIP 106301 / E264).